A 359-amino-acid chain; its full sequence is Phospho-N-acetylmuramoyl-pentapeptide-transferase (359 aa).

10 helical membrane-spanning segments follow: residues 3-23 (QILIAVGLALAVSILLTPVLI), 55-75 (VAILAGIWVSYLGTHLVGLAL), 84-104 (GLLVLGLATALGIVGFIDDLI), 120-140 (TVGILAAALLFGVLALQFGNA), 156-176 (IATVTLAPMIFVLFCVVLVSA), 187-207 (LDGLAAGAMAMVCAAYVLITF), 231-251 (LALVAAAAAGACIGFLWWNAA), 255-275 (IFMGDTGSLALGGIIAGLSVT), 280-300 (ILAVVLGALFVAEVTSVVVQI), and 334-354 (FWLLTAIACGLGVALFYGEWL).

The protein belongs to the glycosyltransferase 4 family. MraY subfamily. Requires Mg(2+) as cofactor.

The protein localises to the cell membrane. The enzyme catalyses UDP-N-acetyl-alpha-D-muramoyl-L-alanyl-gamma-D-glutamyl-meso-2,6-diaminopimeloyl-D-alanyl-D-alanine + di-trans,octa-cis-undecaprenyl phosphate = di-trans,octa-cis-undecaprenyl diphospho-N-acetyl-alpha-D-muramoyl-L-alanyl-D-glutamyl-meso-2,6-diaminopimeloyl-D-alanyl-D-alanine + UMP. It functions in the pathway cell wall biogenesis; peptidoglycan biosynthesis. Functionally, catalyzes the initial step of the lipid cycle reactions in the biosynthesis of the cell wall peptidoglycan: transfers peptidoglycan precursor phospho-MurNAc-pentapeptide from UDP-MurNAc-pentapeptide onto the lipid carrier undecaprenyl phosphate, yielding undecaprenyl-pyrophosphoryl-MurNAc-pentapeptide, known as lipid I. This is Phospho-N-acetylmuramoyl-pentapeptide-transferase from Mycobacterium sp. (strain MCS).